An 811-amino-acid polypeptide reads, in one-letter code: Probable inorganic carbon transporter subunit DabA (811 aa).

Residues Cys336, Asp338, His498, and Cys513 each coordinate Zn(2+).

Belongs to the inorganic carbon transporter (TC 9.A.2) DabA family. Forms a complex with DabB. The cofactor is Zn(2+).

The protein resides in the cell inner membrane. Its function is as follows. Part of an energy-coupled inorganic carbon pump. The protein is Probable inorganic carbon transporter subunit DabA of Azorhizobium caulinodans (strain ATCC 43989 / DSM 5975 / JCM 20966 / LMG 6465 / NBRC 14845 / NCIMB 13405 / ORS 571).